A 155-amino-acid polypeptide reads, in one-letter code: 6,7-dimethyl-8-ribityllumazine synthase (155 aa).

5-amino-6-(D-ribitylamino)uracil is bound by residues Phe24, 58–60 (AFE), and 82–84 (VLI). A (2S)-2-hydroxy-3-oxobutyl phosphate-binding site is contributed by 87–88 (AT). His90 serves as the catalytic Proton donor. Phe115 lines the 5-amino-6-(D-ribitylamino)uracil pocket. Arg129 provides a ligand contact to (2S)-2-hydroxy-3-oxobutyl phosphate.

The protein belongs to the DMRL synthase family.

It catalyses the reaction (2S)-2-hydroxy-3-oxobutyl phosphate + 5-amino-6-(D-ribitylamino)uracil = 6,7-dimethyl-8-(1-D-ribityl)lumazine + phosphate + 2 H2O + H(+). Its pathway is cofactor biosynthesis; riboflavin biosynthesis; riboflavin from 2-hydroxy-3-oxobutyl phosphate and 5-amino-6-(D-ribitylamino)uracil: step 1/2. Functionally, catalyzes the formation of 6,7-dimethyl-8-ribityllumazine by condensation of 5-amino-6-(D-ribitylamino)uracil with 3,4-dihydroxy-2-butanone 4-phosphate. This is the penultimate step in the biosynthesis of riboflavin. The chain is 6,7-dimethyl-8-ribityllumazine synthase from Chloroherpeton thalassium (strain ATCC 35110 / GB-78).